The primary structure comprises 129 residues: Small ribosomal subunit protein uS11 (129 aa).

It belongs to the universal ribosomal protein uS11 family. In terms of assembly, part of the 30S ribosomal subunit. Interacts with proteins S7 and S18. Binds to IF-3.

In terms of biological role, located on the platform of the 30S subunit, it bridges several disparate RNA helices of the 16S rRNA. Forms part of the Shine-Dalgarno cleft in the 70S ribosome. This Anoxybacillus flavithermus (strain DSM 21510 / WK1) protein is Small ribosomal subunit protein uS11.